The primary structure comprises 376 residues: Polygalacturonase (376 aa).

The N-terminal stretch at 1 to 20 (MASSLKLGLIALLGATAVNA) is a signal peptide. Cysteines 39 and 57 form a disulfide. Residues 170–208 (AKELTLSGITVDTADGDSNGGHNTDAFDVGSSNGVYITS) form a PbH1 1 repeat. D215 (proton donor) is an active-site residue. An intrachain disulfide couples C217 to C233. PbH1 repeat units follow at residues 223–243 (GTNVHFTGAQCTGGHGISIGS), 252–273 (VDGVTVESCTIKDSDNGVRIKT), 281–303 (VQGVTYKDITLSGIAKYGIVIEQ), and 315–360 (TSGV…SITG). H237 is a catalytic residue. 2 disulfide bridges follow: C343–C348 and C367–C376.

It belongs to the glycosyl hydrolase 28 family.

It localises to the secreted. The enzyme catalyses (1,4-alpha-D-galacturonosyl)n+m + H2O = (1,4-alpha-D-galacturonosyl)n + (1,4-alpha-D-galacturonosyl)m.. In Penicillium griseoroseum, this protein is Polygalacturonase (PGG1).